A 451-amino-acid chain; its full sequence is Chromosomal replication initiator protein DnaA (451 aa).

The domain I, interacts with DnaA modulators stretch occupies residues 1 to 71 (MSEKEIWDKV…QAIIYDVIGY (71 aa)). Residues 71–112 (YEVKPHFISEDELASYNNVNTQEVQEPQVQHSSIDDKTWGKE) are domain II. The segment at 113–329 (QFNMHNTFDT…GALTRLLAYS (217 aa)) is domain III, AAA+ region. ATP contacts are provided by Gly-157, Gly-159, Lys-160, and Thr-161. The interval 330–451 (KLQGKPITTE…ENLEKEIRNQ (122 aa)) is domain IV, binds dsDNA.

It belongs to the DnaA family. Oligomerizes as a right-handed, spiral filament on DNA at oriC.

Its subcellular location is the cytoplasm. Functionally, plays an essential role in the initiation and regulation of chromosomal replication. ATP-DnaA binds to the origin of replication (oriC) to initiate formation of the DNA replication initiation complex once per cell cycle. Binds the DnaA box (a 9 base pair repeat at the origin) and separates the double-stranded (ds)DNA. Forms a right-handed helical filament on oriC DNA; dsDNA binds to the exterior of the filament while single-stranded (ss)DNA is stabiized in the filament's interior. The ATP-DnaA-oriC complex binds and stabilizes one strand of the AT-rich DNA unwinding element (DUE), permitting loading of DNA polymerase. After initiation quickly degrades to an ADP-DnaA complex that is not apt for DNA replication. Binds acidic phospholipids. This is Chromosomal replication initiator protein DnaA from Staphylococcus epidermidis (strain ATCC 35984 / DSM 28319 / BCRC 17069 / CCUG 31568 / BM 3577 / RP62A).